The following is a 98-amino-acid chain: MVSLEARFDAVQDQLLQVYENDSNTLELCLQYWALIRRENALYYYARQQGKTRLVCTQCLPPEYQNKRLRMQSRCTYVWKACRNQSLPIKDGHLWTLA.

This is Probable protein E3 (E3) from Bos taurus papillomavirus 4 (Bovine papillomavirus 4).